We begin with the raw amino-acid sequence, 257 residues long: Small ribosomal subunit protein uS15m (257 aa).

Residues 1–57 (MLRVAWRTLSLIRTRAVTQVLVPGLPGGGSAKFPFNQWGLQPRSLLLQAARGYVVRK) constitute a mitochondrion transit peptide. A disordered region spans residues 225–257 (RALKAAAAAQKQAKRRNPDSPAKAIPKTLKDSQ).

It belongs to the universal ribosomal protein uS15 family. Component of the mitochondrial small ribosomal subunit (mt-SSU). Mature mammalian 55S mitochondrial ribosomes consist of a small (28S) and a large (39S) subunit. The 28S small subunit contains a 12S ribosomal RNA (12S mt-rRNA) and 30 different proteins. The 39S large subunit contains a 16S rRNA (16S mt-rRNA), a copy of mitochondrial valine transfer RNA (mt-tRNA(Val)), which plays an integral structural role, and 52 different proteins. Interacts with METTL17.

The protein localises to the mitochondrion matrix. In Homo sapiens (Human), this protein is Small ribosomal subunit protein uS15m (MRPS15).